The sequence spans 278 residues: DNA oxidative demethylase ALKBH2 (278 aa).

The segment at 1-49 (MDRFLVKGAVGSLKRRMEQEQTGGGPAGLAEEEGNSKKNPRRAAPGNGV) is disordered. The short motif at 3–7 (RFLVK) is the PCNA-binding element. Substrate contacts are provided by residues 101 to 103 (FGK) and 121 to 123 (YTF). In terms of domain architecture, Fe2OG dioxygenase spans 151–256 (TFNFVLINRY…RVNLTFRKIL (106 aa)). Residues Asn158, Tyr160, and His170 each coordinate 2-oxoglutarate. Residues His170 and Asp172 each coordinate Fe cation. Residue Asp173 coordinates substrate. Residues His235, Arg247, Thr251, and Arg253 each coordinate 2-oxoglutarate. His235 serves as a coordination point for Fe cation.

The protein belongs to the alkB family. As to quaternary structure, interacts with PCNA homotrimer; this interaction is enhanced during the S-phase of the cell cycle. Interacts with nucleolar proteins NCL, UBTF and NPM1. Interacts with XRCC5-XRCC6 heterodimer. Fe(2+) serves as cofactor.

Its subcellular location is the nucleus. The protein localises to the nucleolus. The protein resides in the nucleoplasm. The enzyme catalyses a methylated nucleobase within DNA + 2-oxoglutarate + O2 = a nucleobase within DNA + formaldehyde + succinate + CO2. It carries out the reaction an N(1)-methyl-2'-deoxyadenosine in double-stranded DNA + 2-oxoglutarate + O2 = a 2'-deoxyadenosine in double-stranded DNA + formaldehyde + succinate + CO2 + H(+). The catalysed reaction is an N(1)-methyl-2'-deoxyadenosine in single-stranded DNA + 2-oxoglutarate + O2 = a 2'-deoxyadenosine in single-stranded DNA + formaldehyde + succinate + CO2 + H(+). It catalyses the reaction an N(3)-methyl-2'-deoxycytidine in double-stranded DNA + 2-oxoglutarate + O2 = a 2'-deoxycytidine in double-stranded DNA + formaldehyde + succinate + CO2 + H(+). The enzyme catalyses an N(3)-methyl-2'-deoxycytidine in single-stranded DNA + 2-oxoglutarate + O2 = a 2'-deoxycytidine in single-stranded DNA + formaldehyde + succinate + CO2 + H(+). It carries out the reaction a 1,N(6)-etheno-2'-deoxyadenosine in double-stranded DNA + 2-oxoglutarate + O2 + H2O = a 2'-deoxyadenosine in double-stranded DNA + glyoxal + succinate + CO2. The catalysed reaction is a 1,N(6)-etheno-2'-deoxyadenosine in single-stranded DNA + 2-oxoglutarate + O2 + H2O = a 2'-deoxyadenosine in single-stranded DNA + glyoxal + succinate + CO2. It catalyses the reaction a 3,N(4)-etheno-2'-deoxycytidine in double-stranded DNA + 2-oxoglutarate + O2 + H2O = a 2'-deoxycytidine in double-stranded DNA + glyoxal + succinate + CO2. The enzyme catalyses a 3,N(4)-etheno-2'-deoxycytidine in single-stranded DNA + 2-oxoglutarate + O2 + H2O = a 2'-deoxycytidine in single-stranded DNA + glyoxal + succinate + CO2. It carries out the reaction a 1,N(2)-etheno-2'-deoxyguanosine in double-stranded DNA + 2-oxoglutarate + O2 + H2O = a 2'-deoxyguanosine in double-stranded DNA + glyoxal + succinate + CO2. Activated by ascorbate and magnesium ions. In terms of biological role, dioxygenase that repairs alkylated nucleic acid bases by direct reversal oxidative dealkylation. Can process both double-stranded (ds) and single-stranded (ss) DNA substrates, with a strong preference for dsDNA. Uses molecular oxygen, 2-oxoglutarate and iron as cofactors to oxidize the alkyl groups that are subsequently released as aldehydes, regenerating the undamaged bases. Probes the base pair stability, locates a weakened base pair and flips the damaged base to accommodate the lesion in its active site for efficient catalysis. Repairs monoalkylated bases, specifically N1-methyladenine and N3-methylcytosine, as well as higher order alkyl adducts such as bases modified with exocyclic bridged adducts known as etheno adducts including 1,N6-ethenoadenine, 3,N4-ethenocytosine and 1,N2-ethenoguanine. Acts as a gatekeeper of genomic integrity under alkylation stress. Efficiently repairs alkylated lesions in ribosomal DNA (rDNA). These lesions can cause ss- and dsDNA strand breaks that severely impair rDNA transcription. In a response mechanism to DNA damage, associates with PCNA at replication forks to repair alkylated adducts prior to replication. The polypeptide is DNA oxidative demethylase ALKBH2 (ALKBH2) (Bos taurus (Bovine)).